Reading from the N-terminus, the 373-residue chain is Putative F-box/kelch-repeat protein At2g41360 (373 aa).

The region spanning 8–54 is the F-box domain; that stretch reads WSSLSCLPDEMVLNCLARVPRRYYENISCVSVRLRSLVRTPELYRMR. 2 Kelch repeats span residues 116–162 and 163–208; these read EIYF…VFDG and KIHV…MVSS.

This chain is Putative F-box/kelch-repeat protein At2g41360, found in Arabidopsis thaliana (Mouse-ear cress).